A 266-amino-acid chain; its full sequence is Killer cell lectin-like receptor 8 (266 aa).

Topologically, residues 1 to 44 are cytoplasmic; it reads MSEQEVTFPTMRFHKSSGLNSQVRLEGTQRSRKAGLRVCSVPWQ. Residues 45-66 form a helical; Signal-anchor for type II membrane protein membrane-spanning segment; sequence LIVIALGILCSLRLVIVAVFVT. The Extracellular portion of the chain corresponds to 67-266; sequence KFFQYSQHKQ…CGKKLDKFPD (200 aa). Residues Asn87 and Asn104 are each glycosylated (N-linked (GlcNAc...) asparagine). Residues 143-261 form the C-type lectin domain; the sequence is GVKYWFCYGT…PYYCICGKKL (119 aa). 4 disulfides stabilise this stretch: Cys149-Cys154, Cys167-Cys255, Cys171-Cys257, and Cys236-Cys249.

Homodimer; disulfide-linked. Interacts with the adapter protein TYROBP/DAP12; the interaction leads to natural killer cell activation.

It localises to the cell membrane. Its function is as follows. Receptor on natural killer (NK) cells for class I MHC. The protein is Killer cell lectin-like receptor 8 (Klra8) of Mus musculus (Mouse).